The sequence spans 486 residues: PTS system N-acetylmuramic acid-specific EIIBC component (486 aa).

Residues 1 to 89 (MAKITQTMIS…NKLIESVING (89 aa)) enclose the PTS EIIB type-1 domain. Cys28 functions as the Phosphocysteine intermediate; for EIIB activity in the catalytic mechanism. Positions 127–486 (SKFATIFTPL…FFGSKDVDLS (360 aa)) constitute a PTS EIIC type-1 domain. The next 10 helical transmembrane spans lie at 129–149 (FATI…LLGF), 170–190 (LIAY…ILIG), 196–216 (AFGG…LGYN), 230–250 (FFGY…AAII), 268–288 (MILT…VVIM), 312–332 (AAIL…QGFV), 347–367 (LFPI…ALYF), 381–401 (GAII…VTLP), 411–431 (IGGA…LPVG), and 453–473 (IFAG…VGFL).

Its subcellular location is the cell inner membrane. The enzyme catalyses N-acetyl-beta-D-muramate(out) + N(pros)-phospho-L-histidyl-[protein] = N-acetyl-beta-D-muramate 6-phosphate(in) + L-histidyl-[protein]. The phosphoenolpyruvate-dependent sugar phosphotransferase system (sugar PTS), a major carbohydrate active transport system, catalyzes the phosphorylation of incoming sugar substrates concomitantly with their translocation across the cell membrane. This system is involved in N-acetylmuramic acid (MurNAc) transport, yielding cytoplasmic MurNAc-6-P. Is also able to take up anhydro-N-acetylmuramic acid (anhMurNAc), but cannot phosphorylate the carbon 6, probably because of the 1,6-anhydro ring. In Vibrio vulnificus (strain YJ016), this protein is PTS system N-acetylmuramic acid-specific EIIBC component (murP).